The following is a 110-amino-acid chain: Large ribosomal subunit protein uL24 (110 aa).

This sequence belongs to the universal ribosomal protein uL24 family. As to quaternary structure, part of the 50S ribosomal subunit.

Its function is as follows. One of two assembly initiator proteins, it binds directly to the 5'-end of the 23S rRNA, where it nucleates assembly of the 50S subunit. One of the proteins that surrounds the polypeptide exit tunnel on the outside of the subunit. This is Large ribosomal subunit protein uL24 from Chloroflexus aurantiacus (strain ATCC 29366 / DSM 635 / J-10-fl).